A 566-amino-acid chain; its full sequence is Cytochrome c oxidase subunit 1 (566 aa).

Transmembrane regions (helical) follow at residues isoleucine 29–valine 49, valine 97–glycine 117, leucine 141–glycine 161, leucine 189–isoleucine 209, leucine 227–alanine 247, isoleucine 278–valine 298, and isoleucine 310–valine 330. Residue histidine 102 participates in Fe(II)-heme a binding. Residues histidine 284 and tyrosine 288 each coordinate Cu cation. Positions histidine 284–tyrosine 288 form a cross-link, 1'-histidyl-3'-tyrosine (His-Tyr). Residues histidine 333 and histidine 334 each coordinate Cu cation. A run of 2 helical transmembrane segments spans residues phenylalanine 348–alanine 368 and methionine 381–leucine 401. Residue histidine 419 participates in heme a3 binding. Helical transmembrane passes span phenylalanine 420–isoleucine 440, leucine 455–glycine 475, and leucine 499–leucine 519. Residue histidine 421 coordinates Fe(II)-heme a. Residues threonine 543–histidine 566 are disordered. The span at histidine 549–histidine 566 shows a compositional bias: basic and acidic residues.

Belongs to the heme-copper respiratory oxidase family. It depends on Cu(2+) as a cofactor. Heme serves as cofactor.

Its subcellular location is the cell membrane. The enzyme catalyses 4 Fe(II)-[cytochrome c] + O2 + 8 H(+)(in) = 4 Fe(III)-[cytochrome c] + 2 H2O + 4 H(+)(out). Its pathway is energy metabolism; oxidative phosphorylation. Cytochrome c oxidase is the component of the respiratory chain that catalyzes the reduction of oxygen to water. Subunits 1-3 form the functional core of the enzyme complex. Co I is the catalytic subunit of the enzyme. Electrons originating in cytochrome c are transferred via the copper A center of subunit 2 and heme a of subunit 1 to the bimetallic center formed by heme a3 and copper B. This cytochrome c oxidase shows proton pump activity across the membrane in addition to the electron transfer. In Cereibacter sphaeroides (Rhodobacter sphaeroides), this protein is Cytochrome c oxidase subunit 1 (ctaD).